The chain runs to 143 residues: Peptide methionine sulfoxide reductase MsrB (143 aa).

Residues N5 to K127 form the MsrB domain. Catalysis depends on C116, which acts as the Nucleophile.

Belongs to the MsrB Met sulfoxide reductase family.

It catalyses the reaction L-methionyl-[protein] + [thioredoxin]-disulfide + H2O = L-methionyl-(R)-S-oxide-[protein] + [thioredoxin]-dithiol. The sequence is that of Peptide methionine sulfoxide reductase MsrB from Halalkalibacterium halodurans (strain ATCC BAA-125 / DSM 18197 / FERM 7344 / JCM 9153 / C-125) (Bacillus halodurans).